We begin with the raw amino-acid sequence, 419 residues long: Serine hydroxymethyltransferase (419 aa).

Residues Leu-121 and 125–127 each bind (6S)-5,6,7,8-tetrahydrofolate; that span reads GHL. An N6-(pyridoxal phosphate)lysine modification is found at Lys-231.

It belongs to the SHMT family. Homodimer. It depends on pyridoxal 5'-phosphate as a cofactor.

The protein resides in the cytoplasm. The enzyme catalyses (6R)-5,10-methylene-5,6,7,8-tetrahydrofolate + glycine + H2O = (6S)-5,6,7,8-tetrahydrofolate + L-serine. The protein operates within one-carbon metabolism; tetrahydrofolate interconversion. Its pathway is amino-acid biosynthesis; glycine biosynthesis; glycine from L-serine: step 1/1. Its function is as follows. Catalyzes the reversible interconversion of serine and glycine with tetrahydrofolate (THF) serving as the one-carbon carrier. This reaction serves as the major source of one-carbon groups required for the biosynthesis of purines, thymidylate, methionine, and other important biomolecules. Also exhibits THF-independent aldolase activity toward beta-hydroxyamino acids, producing glycine and aldehydes, via a retro-aldol mechanism. The sequence is that of Serine hydroxymethyltransferase from Phytoplasma mali (strain AT).